The sequence spans 312 residues: Glycine--tRNA ligase alpha subunit (312 aa).

This sequence belongs to the class-II aminoacyl-tRNA synthetase family. In terms of assembly, tetramer of two alpha and two beta subunits.

It localises to the cytoplasm. The catalysed reaction is tRNA(Gly) + glycine + ATP = glycyl-tRNA(Gly) + AMP + diphosphate. The chain is Glycine--tRNA ligase alpha subunit (glyQ) from Buchnera aphidicola subsp. Acyrthosiphon pisum (strain APS) (Acyrthosiphon pisum symbiotic bacterium).